The primary structure comprises 360 residues: Ankyrin repeat domain-containing protein 2 (360 aa).

The tract at residues 5–120 (PSWAGVGALA…GIQNLIELRK (116 aa)) is may mediate interaction with PML, p53/TP53 and YBX1. Serine 99 is modified (phosphoserine; by PKB/AKT2). The interval 126-147 (KRDALAASHEPPPEPEEITGPV) is disordered. A compositionally biased stretch (acidic residues) spans 138-147 (PEPEEITGPV). 5 ANK repeats span residues 147 to 176 (VDEE…SADT), 180 to 209 (FRRT…TVDF), 213 to 242 (LDCT…DTNV), 246 to 275 (LLST…EINA), and 279 to 308 (EGDT…DMMT). Residues 330–342 (ALEHPEPGAEHNG) are compositionally biased toward basic and acidic residues. The tract at residues 330–360 (ALEHPEPGAEHNGLEGPNDSGRETPQPVPAQ) is disordered.

In terms of assembly, interacts with ID3; both proteins cooperate in myoblast differentiation. Interacts with TTN/titin. Interacts (via ANK repeats) with TCAP; the interaction is direct. Interacts with TJP1 (via PDZ domains). Interacts with PML; the interaction is direct. Interacts with p53/TP53. Interacts with YBX1. Interacts with AKT2. Post-translationally, phosphorylation at Ser-99 by PKB/AKT2 in response to oxidative stress induces translocation to the nucleus and negatively regulates myoblast differentiation. As to expression, mostly expressed in skeletal and cardiac muscles. Found in slow fibers. Also expressed in kidney, but to a lower extent (at protein level).

It is found in the cytoplasm. It localises to the myofibril. The protein localises to the sarcomere. Its subcellular location is the i band. The protein resides in the cytosol. It is found in the nucleus. It localises to the PML body. Functionally, functions as a negative regulator of myocyte differentiation. May interact with both sarcoplasmic structural proteins and nuclear proteins to regulate gene expression during muscle development and in response to muscle stress. The protein is Ankyrin repeat domain-containing protein 2 (ANKRD2) of Homo sapiens (Human).